A 329-amino-acid chain; its full sequence is Type 2 lactosamine alpha-2,3-sialyltransferase (329 aa).

The Cytoplasmic segment spans residues 1 to 4 (MKGY). Residues 5-25 (LVAIFLSSIFLYYVLYCILWG) traverse the membrane as a helical; Signal-anchor for type II membrane protein segment. At 26–329 (TNGYWFPAEE…IKKKMVINLT (304 aa)) the chain is on the lumenal side. N-linked (GlcNAc...) asparagine glycans are attached at residues Asn129, Asn181, Asn295, and Asn308.

It belongs to the glycosyltransferase 29 family.

It localises to the golgi apparatus membrane. The enzyme catalyses a neolactoside nLc4Cer(d18:1(4E)) + CMP-N-acetyl-beta-neuraminate = a neolactoside IV(3)-alpha-NeuAc-nLc4Cer(d18:1(4E)) + CMP + H(+). The catalysed reaction is a beta-D-galactosyl-(1-&gt;4)-N-acetyl-beta-D-glucosaminyl derivative + CMP-N-acetyl-beta-neuraminate = an N-acetyl-alpha-neuraminyl-(2-&gt;3)-beta-D-galactosyl-(1-&gt;4)-N-acetyl-beta-D-glucosaminyl derivative + CMP + H(+). It carries out the reaction a neolactoside nLc6Cer(d18:1(4E)) + CMP-N-acetyl-beta-neuraminate = a neolactoside VI(3)-alpha-NeuNAc-nLc6Cer(d18:1(4E)) + CMP + H(+). Its function is as follows. Transfers the sialyl residue from CMP-N-acetyl-beta-neuraminate to the terminal galactose residue on sugar chains of glycoproteins and glycolipids. It's alpha-2,3-sialyltransferase activity is specific toward type II glycan chains (Galbeta1-4GlcNAc) on glycoproteins and glycolipids such as neolactosides nLc4Cer and nLc6Cer, whose sialyl-products serve as precursors for the Lewis X antigen. Critically involved in the synthesis of functional selectin ligands needed for neutrophil recruitment during inflammation and lymphocyte homing to the lymph nodes. The sequence is that of Type 2 lactosamine alpha-2,3-sialyltransferase (St3gal6) from Mus musculus (Mouse).